Reading from the N-terminus, the 357-residue chain is S-adenosylmethionine:tRNA ribosyltransferase-isomerase (357 aa).

This sequence belongs to the QueA family. As to quaternary structure, monomer.

Its subcellular location is the cytoplasm. The catalysed reaction is 7-aminomethyl-7-carbaguanosine(34) in tRNA + S-adenosyl-L-methionine = epoxyqueuosine(34) in tRNA + adenine + L-methionine + 2 H(+). The protein operates within tRNA modification; tRNA-queuosine biosynthesis. In terms of biological role, transfers and isomerizes the ribose moiety from AdoMet to the 7-aminomethyl group of 7-deazaguanine (preQ1-tRNA) to give epoxyqueuosine (oQ-tRNA). This Buchnera aphidicola subsp. Acyrthosiphon pisum (strain Tuc7) protein is S-adenosylmethionine:tRNA ribosyltransferase-isomerase.